Here is a 242-residue protein sequence, read N- to C-terminus: Murein peptide amidase A (242 aa).

A Peptidase M14 domain is found at 1 to 234; it reads MTVTRPRAER…FAMANLLRWH (234 aa). Positions 49, 52, and 157 each coordinate Zn(2+). The Proton donor/acceptor role is filled by Glu210.

Belongs to the peptidase M14 family. As to quaternary structure, homodimer. It depends on Zn(2+) as a cofactor.

Its subcellular location is the cytoplasm. It catalyses the reaction L-alanyl-gamma-D-glutamyl-meso-2,6-diaminopimelate + H2O = L-alanyl-D-glutamate + meso-2,6-diaminopimelate. Its pathway is cell wall degradation; peptidoglycan degradation. In terms of biological role, involved in muropeptide degradation. Catalyzes the hydrolysis of the gamma-D-glutamyl-diaminopimelic acid (gamma-D-Glu-Dap) amide bond in the murein tripeptide L-alanyl-gamma-D-glutamyl-meso-diaminopimelic acid, leading to the formation of L-Ala-gamma-D-Glu and Dap. The protein is Murein peptide amidase A of Escherichia coli O157:H7.